Here is a 331-residue protein sequence, read N- to C-terminus: Holliday junction branch migration complex subunit RuvB (331 aa).

Residues 1-171 (MTEPLDAALR…FGIIEHLEYY (171 aa)) are large ATPase domain (RuvB-L). ATP contacts are provided by residues Leu9, Arg10, Gly51, Lys54, Thr55, Thr56, 118-120 (EDF), Arg161, Tyr171, and Arg208. Thr55 lines the Mg(2+) pocket. The segment at 172 to 242 (TPEEIGTNLL…RAQDALDKLG (71 aa)) is small ATPAse domain (RuvB-S). The tract at residues 245–331 (TAGLDERDKK…AESDLGLYTN (87 aa)) is head domain (RuvB-H). DNA contacts are provided by Arg300 and Arg305.

Belongs to the RuvB family. As to quaternary structure, homohexamer. Forms an RuvA(8)-RuvB(12)-Holliday junction (HJ) complex. HJ DNA is sandwiched between 2 RuvA tetramers; dsDNA enters through RuvA and exits via RuvB. An RuvB hexamer assembles on each DNA strand where it exits the tetramer. Each RuvB hexamer is contacted by two RuvA subunits (via domain III) on 2 adjacent RuvB subunits; this complex drives branch migration. In the full resolvosome a probable DNA-RuvA(4)-RuvB(12)-RuvC(2) complex forms which resolves the HJ.

The protein resides in the cytoplasm. The enzyme catalyses ATP + H2O = ADP + phosphate + H(+). Its function is as follows. The RuvA-RuvB-RuvC complex processes Holliday junction (HJ) DNA during genetic recombination and DNA repair, while the RuvA-RuvB complex plays an important role in the rescue of blocked DNA replication forks via replication fork reversal (RFR). RuvA specifically binds to HJ cruciform DNA, conferring on it an open structure. The RuvB hexamer acts as an ATP-dependent pump, pulling dsDNA into and through the RuvAB complex. RuvB forms 2 homohexamers on either side of HJ DNA bound by 1 or 2 RuvA tetramers; 4 subunits per hexamer contact DNA at a time. Coordinated motions by a converter formed by DNA-disengaged RuvB subunits stimulates ATP hydrolysis and nucleotide exchange. Immobilization of the converter enables RuvB to convert the ATP-contained energy into a lever motion, pulling 2 nucleotides of DNA out of the RuvA tetramer per ATP hydrolyzed, thus driving DNA branch migration. The RuvB motors rotate together with the DNA substrate, which together with the progressing nucleotide cycle form the mechanistic basis for DNA recombination by continuous HJ branch migration. Branch migration allows RuvC to scan DNA until it finds its consensus sequence, where it cleaves and resolves cruciform DNA. The polypeptide is Holliday junction branch migration complex subunit RuvB (Deinococcus geothermalis (strain DSM 11300 / CIP 105573 / AG-3a)).